Consider the following 41-residue polypeptide: Ostricacin-2 (41 aa).

3 disulfide bridges follow: C8–C36, C15–C30, and C20–C37.

The protein resides in the secreted. In terms of biological role, has antibacterial activity against the Gram-positive bacterium S.aureus 1056 MRSA (MIC=1.25 ug/ml) and the Gram-negative bacterium E.coli O157:H7 (MIC=0.96 ug/ml). Has antifungal activity against the yeast C.albicans 3153A (MIC=6.20 ug/ml). The protein is Ostricacin-2 of Struthio camelus (Common ostrich).